A 487-amino-acid chain; its full sequence is Argininosuccinate lyase (487 aa).

It belongs to the lyase 1 family. Argininosuccinate lyase subfamily.

The protein localises to the cytoplasm. It carries out the reaction 2-(N(omega)-L-arginino)succinate = fumarate + L-arginine. The protein operates within amino-acid biosynthesis; L-arginine biosynthesis; L-arginine from L-ornithine and carbamoyl phosphate: step 3/3. This chain is Argininosuccinate lyase, found in Methanococcus aeolicus (strain ATCC BAA-1280 / DSM 17508 / OCM 812 / Nankai-3).